A 260-amino-acid polypeptide reads, in one-letter code: MQAARGGAGRPERPGRPGRGPERERERPPGAGAASPCAAPGLPAGGATIHPGSPSAWPPRARAALRLWLGCVCFALVQADSPSAPVNVTVRHLKANSAVVSWDVLEDEVVIGFAISQQKKDVRMLRFIQEVNTTTRSCALWDLEEDTEYIVHVQAISIQGQSPASEPVLFKTPREAEKMASKNKDEVTMKEMGRNQQLRTGEVLIIVVVLFMWAGVIALFCRQYDIIKDNEPNNNKEKTKSASETSTPEHQGGGLLRSKI.

The tract at residues 1 to 56 (MQAARGGAGRPERPGRPGRGPERERERPPGAGAASPCAAPGLPAGGATIHPGSPSA) is disordered. Over residues 10–28 (RPERPGRPGRGPERERERP) the composition is skewed to basic and acidic residues. A compositionally biased stretch (low complexity) spans 29-56 (PGAGAASPCAAPGLPAGGATIHPGSPSA). The region spanning 84 to 175 (APVNVTVRHL…EPVLFKTPRE (92 aa)) is the Fibronectin type-III domain. N-linked (GlcNAc...) asparagine glycosylation is found at Asn-87 and Asn-132. A helical membrane pass occupies residues 201-221 (GEVLIIVVVLFMWAGVIALFC). Over residues 230 to 241 (NEPNNNKEKTKS) the composition is skewed to basic and acidic residues. The disordered stretch occupies residues 230–260 (NEPNNNKEKTKSASETSTPEHQGGGLLRSKI). Gly residues predominate over residues 251–260 (QGGGLLRSKI). The Microbody targeting signal motif lies at 258–260 (SKI).

As to quaternary structure, dimer; may exist in other oligomeric forms. Post-translationally, the extracellular domain is cleaved and released from the cell membrane. N-Glycosylated. Widely expressed, with highest levels in heart. Very low expression, if any, in colon, pancreas and spleen.

It localises to the cell membrane. It is found in the peroxisome membrane. Its subcellular location is the secreted. Functionally, mediates beneficial effects of muscular exercise. Induces browning of white adipose tissue by stimulating UCP1 expression, at least in part, via the nuclear receptor PPARA. The protein is Fibronectin type III domain-containing protein 5 (FNDC5) of Homo sapiens (Human).